The sequence spans 140 residues: Methylglyoxal synthase (140 aa).

The MGS-like domain maps to 1–140 (MKIALIAHDK…RGRKGEINGL (140 aa)). Substrate-binding positions include histidine 8, lysine 12, 34–37 (TGTT), and 54–55 (SG). Catalysis depends on aspartate 60, which acts as the Proton donor/acceptor. Residue histidine 87 participates in substrate binding.

This sequence belongs to the methylglyoxal synthase family.

The enzyme catalyses dihydroxyacetone phosphate = methylglyoxal + phosphate. Catalyzes the formation of methylglyoxal from dihydroxyacetone phosphate. This is Methylglyoxal synthase from Geobacillus sp. (strain WCH70).